Reading from the N-terminus, the 405-residue chain is Cystathionine gamma-lyase (405 aa).

Substrate-binding residues include arginine 62, tyrosine 114, and arginine 119. An N6-(pyridoxal phosphate)lysine modification is found at lysine 212. Residue glutamate 339 participates in substrate binding.

Belongs to the trans-sulfuration enzymes family. As to quaternary structure, homotetramer. Interacts with CALM in a calcium-dependent manner. The cofactor is pyridoxal 5'-phosphate. As to expression, highly expressed in liver. Also in muscle and lower expression in most tissues except heart, pituitary gland, spleen, thymus, and vascular tissue, where it is hardly detected.

Its subcellular location is the cytoplasm. It catalyses the reaction L,L-cystathionine + H2O = 2-oxobutanoate + L-cysteine + NH4(+). It carries out the reaction L-cysteine + H2O = hydrogen sulfide + pyruvate + NH4(+) + H(+). The enzyme catalyses L-homocysteine + H2O = 2-oxobutanoate + hydrogen sulfide + NH4(+) + H(+). The catalysed reaction is L-homoserine = 2-oxobutanoate + NH4(+). It catalyses the reaction L-selenocystathionine + H2O = L-selenocysteine + 2-oxobutanoate + NH4(+). It participates in amino-acid biosynthesis; L-cysteine biosynthesis; L-cysteine from L-homocysteine and L-serine: step 2/2. With respect to regulation, inhibited by propargylglycine, trifluoroalanine and aminoethoxyvinylglycine. In terms of biological role, catalyzes the last step in the trans-sulfuration pathway from L-methionine to L-cysteine in a pyridoxal-5'-phosphate (PLP)-dependent manner, which consists on cleaving the L,L-cystathionine molecule into L-cysteine, ammonia and 2-oxobutanoate. Part of the L-cysteine derived from the trans-sulfuration pathway is utilized for biosynthesis of the ubiquitous antioxidant glutathione. Besides its role in the conversion of L-cystathionine into L-cysteine, it utilizes L-cysteine and L-homocysteine as substrates (at much lower rates than L,L-cystathionine) to produce the endogenous gaseous signaling molecule hydrogen sulfide (H2S). In vitro, it converts two L-cysteine molecules into lanthionine and H2S, also two L-homocysteine molecules to homolanthionine and H2S, which can be particularly relevant under conditions of severe hyperhomocysteinemia (which is a risk factor for cardiovascular disease, diabetes, and Alzheimer's disease). Lanthionine and homolanthionine are structural homologs of L,L-cystathionine that differ by the absence or presence of an extra methylene group, respectively. Acts as a cysteine-protein sulfhydrase by mediating sulfhydration of target proteins: sulfhydration consists of converting -SH groups into -SSH on specific cysteine residues of target proteins such as GAPDH, PTPN1 and NF-kappa-B subunit RELA, thereby regulating their function. By generating the gasotransmitter H2S, it participates in a number of physiological processes such as vasodilation, bone protection, and inflammation. Plays an essential role in myogenesis by contributing to the biogenesis of H2S in skeletal muscle tissue. Can also accept homoserine as substrate. Catalyzes the elimination of selenocystathionine (which can be derived from the diet) to yield selenocysteine, ammonia and 2-oxobutanoate. The chain is Cystathionine gamma-lyase (CTH) from Homo sapiens (Human).